Here is a 378-residue protein sequence, read N- to C-terminus: Acyl-coenzyme A diphosphatase NUDT19 (378 aa).

Residues 7-258 (HWREAASVLL…EIWLAPPQFY (252 aa)) enclose the Nudix hydrolase domain. The Nudix box signature appears at 105-126 (SPLPGEVAFRICAIRETFEEAG). Glutamate 120 and glutamate 124 together coordinate Mg(2+). Positions 376–378 (SRL) match the Microbody targeting signal motif.

It belongs to the Nudix hydrolase family. As to quaternary structure, monomer. Requires Mg(2+) as cofactor. Mn(2+) serves as cofactor.

It is found in the peroxisome. It catalyses the reaction an acyl-CoA + H2O = an acyl-4'-phosphopantetheine + adenosine 3',5'-bisphosphate + 2 H(+). The catalysed reaction is CoA + H2O = (R)-4'-phosphopantetheine + adenosine 3',5'-bisphosphate + 2 H(+). It carries out the reaction hexanoyl-CoA + H2O = hexanoyl-4'-phosphopantetheine + adenosine 3',5'-bisphosphate + 2 H(+). The enzyme catalyses octanoyl-CoA + H2O = S-octanoyl-4'-phosphopantetheine + adenosine 3',5'-bisphosphate + 2 H(+). It catalyses the reaction butanoyl-CoA + H2O = S-butanoyl-4'-phosphopantetheine + adenosine 3',5'-bisphosphate + 2 H(+). The catalysed reaction is propanoyl-CoA + H2O = propanoyl-4'-phosphopantetheine + adenosine 3',5'-bisphosphate + 2 H(+). It carries out the reaction malonyl-CoA + H2O = malonyl-4'-phosphopantetheine + adenosine 3',5'-bisphosphate + 2 H(+). The enzyme catalyses succinyl-CoA + H2O = succinyl-4'-phosphopantetheine + adenosine 3',5'-bisphosphate + 2 H(+). It catalyses the reaction choloyl-CoA + H2O = S-choloyl-4'-phosphopantetheine + adenosine 3',5'-bisphosphate + 2 H(+). The catalysed reaction is 4,8-dimethylnonanoyl-CoA + H2O = S-(4,8-dimethylnonanoyl)-4'-phosphopantetheine + adenosine 3',5'-bisphosphate + 2 H(+). It carries out the reaction (9Z,12Z,15Z)-octadecatrienoyl-CoA + H2O = S-(9Z,12Z,15Z-octadecatrienoyl)-4'-phosphopantetheine + adenosine 3',5'-bisphosphate + 2 H(+). The enzyme catalyses (9Z,12Z)-octadecadienoyl-CoA + H2O = S-(9Z,12Z-octadecadienoyl)-4'-phosphopantetheine + adenosine 3',5'-bisphosphate + 2 H(+). It catalyses the reaction (9Z)-hexadecenoyl-CoA + H2O = S-(9Z-hexadecenoyl)-4'-phosphopantetheine + adenosine 3',5'-bisphosphate + 2 H(+). The catalysed reaction is (9Z)-tetradecenoyl-CoA + H2O = S-(9Z-tetradecenoyl)-4'-phosphopantetheine + adenosine 3',5'-bisphosphate + 2 H(+). It carries out the reaction (6Z)-octenoyl-CoA + H2O = S-(6Z-octenoyl)-4'-phosphopantetheine + adenosine 3',5'-bisphosphate + 2 H(+). The enzyme catalyses hexadecanoyl-CoA + H2O = S-hexadecanoyl-4'-phosphopantetheine + adenosine 3',5'-bisphosphate + 2 H(+). It catalyses the reaction tetradecanoyl-CoA + H2O = tetradecanoyl-4'-phosphopantetheine + adenosine 3',5'-bisphosphate + 2 H(+). The catalysed reaction is dodecanoyl-CoA + H2O = S-dodecanoyl-4'-phosphopantetheine + adenosine 3',5'-bisphosphate + 2 H(+). It carries out the reaction a 5'-end CoA-ribonucleoside in mRNA + H2O = a 5'-end phospho-adenosine-phospho-ribonucleoside in mRNA + (R)-4'-phosphopantetheine + 2 H(+). Fatty acyl-coenzyme A (CoA) diphosphatase that hydrolyzes fatty acyl-CoA to yield acyl-4'-phosphopantetheine and adenosine 3',5'-bisphosphate. Mediates the hydrolysis of a wide range of CoA esters, including choloyl-CoA and branched-chain fatty-acyl-CoA esters and at low substrate concentrations medium and long-chain fatty-acyl-CoA esters are the primary substrates. Highest activity seen with medium-chain acyl-CoA esters and higher rates of activity seen with the unsaturated acyl-CoA esters compared with the saturated esters. Exhibits decapping activity towards dpCoA-capped RNAs in vitro. The chain is Acyl-coenzyme A diphosphatase NUDT19 (NUDT19) from Gallus gallus (Chicken).